The chain runs to 131 residues: MAAAVAMETDDAGNRLRFQLELEFVQCLANPNYLNFLAQRGYFKDKAFVNYLKYLLYWKEPEYAKYLKYPQCLHMLELLQYEHFRKELVNAQCAKFIDEQQILHWQHYSRKRMRLQQALAEQQQQNNASGK.

The residue at position 2 (Ala2) is an N-acetylalanine.

This sequence belongs to the Mediator complex subunit 31 family. As to quaternary structure, component of the Mediator complex, which is composed of MED1, MED4, MED6, MED7, MED8, MED9, MED10, MED11, MED12, MED13, MED13L, MED14, MED15, MED16, MED17, MED18, MED19, MED20, MED21, MED22, MED23, MED24, MED25, MED26, MED27, MED29, MED30, MED31, CCNC, CDK8 and CDC2L6/CDK11. The MED12, MED13, CCNC and CDK8 subunits form a distinct module termed the CDK8 module. Mediator containing the CDK8 module is less active than Mediator lacking this module in supporting transcriptional activation. Individual preparations of the Mediator complex lacking one or more distinct subunits have been variously termed ARC, CRSP, DRIP, PC2, SMCC and TRAP.

It localises to the nucleus. Its function is as follows. Component of the Mediator complex, a coactivator involved in the regulated transcription of nearly all RNA polymerase II-dependent genes. Mediator functions as a bridge to convey information from gene-specific regulatory proteins to the basal RNA polymerase II transcription machinery. Mediator is recruited to promoters by direct interactions with regulatory proteins and serves as a scaffold for the assembly of a functional preinitiation complex with RNA polymerase II and the general transcription factors. The chain is Mediator of RNA polymerase II transcription subunit 31 (MED31) from Bos taurus (Bovine).